We begin with the raw amino-acid sequence, 235 residues long: MSQPPLDELQWKSPEWIQSFGLRTDNVLDYFSQSPFFDKTSNNHVVKMQQQFSQQMPPAPQTARPKAAPSAERQAIWDRYPAYALLEQELAKLKGIEYVLAHVREPDFWVVRKQRRAGDRVTALNDYYIIGANVYQAPTAYSVVQNRLLSTGFHLSAALGAIQRLARFQPGQGAAFVPVEQNSVQPASGTTASSATAPALTAALDGATAGYSDVLTPEMMDRLMLQSLKSTPLYL.

This sequence belongs to the Mediator complex subunit 6 family. As to quaternary structure, component of the Mediator complex.

Its subcellular location is the nucleus. In terms of biological role, component of the Mediator complex, a coactivator involved in the regulated transcription of nearly all RNA polymerase II-dependent genes. Mediator functions as a bridge to convey information from gene-specific regulatory proteins to the basal RNA polymerase II transcription machinery. Mediator is recruited to promoters by direct interactions with regulatory proteins and serves as a scaffold for the assembly of a functional preinitiation complex with RNA polymerase II and the general transcription factors. In Eremothecium gossypii (strain ATCC 10895 / CBS 109.51 / FGSC 9923 / NRRL Y-1056) (Yeast), this protein is Mediator of RNA polymerase II transcription subunit 6 (MED6).